Here is an 834-residue protein sequence, read N- to C-terminus: MEAMLPLFEPKGRVLLVDGHHLAYRTFFALKGLTTSRGEPVQAVYGFAKSLLKALKEDGYKAVFVVFDAKAPSFRHEAYEAYKAGRAPTPEDFPRQLALIKELVDLLGFTRLEVPGYEADDVLATLAKNPEKEGYEVRILTADRDLDQLVSDRVAVLHPEGHLITPEWLWQKYGLKPEQWVDFRALVGDPSDNLPGVKGIGEKTALKLLKEWGSLENLLKNLDRVKPENVREKIKAHLEDLRLSLELSRVRTDLPLEVDLAQGREPDREGLRAFLERLEFGSLLHEFGLLEAPAPLEEAPWPPPEGAFVGFVLSRPEPMWAELKALAACRDGRVHRAADPLAGLKDLKEVRGLLAKDLAVLASREGLDLVPGDDPMLLAYLLDPSNTTPEGVARRYGGEWTEDAAHRALLSERLHRNLLKRLQGEEKLLWLYHEVEKPLSRVLAHMEATGVRLDVAYLQALSLELAEEIRRLEEEVFRLAGHPFNLNSRDQLERVLFDELRLPALGKTQKTGKRSTSAAVLEALREAHPIVEKILQHRELTKLKNTYVDPLPSLVHPNTGRLHTRFNQTATATGRLSSSDPNLQNIPVRTPLGQRIRRAFVAEAGWALVALDYSQIELRVLAHLSGDENLIRVFQEGKDIHTQTASWMFGVPPEAVDPLMRRAAKTVNFGVLYGMSAHRLSQELAIPYEEAVAFIERYFQSFPKVRAWIEKTLEEGRKRGYVETLFGRRRYVPDLNARVKSVREAAERMAFNMPVQGTAADLMKLAMVKLFPRLREMGARMLLQVHDELLLEAPQAGAEEVAALAKEAMEKAYPLAVPLEVEVGMGEDWLSAKG.

In terms of domain architecture, 5'-3' exonuclease spans 176–262; sequence KPEQWVDFRA…DLPLEVDLAQ (87 aa). The polymerase stretch occupies residues 412 to 834; sequence ERLHRNLLKR…MGEDWLSAKG (423 aa).

The protein belongs to the DNA polymerase type-A family.

The catalysed reaction is DNA(n) + a 2'-deoxyribonucleoside 5'-triphosphate = DNA(n+1) + diphosphate. Its function is as follows. Has 5'-3' exonuclease activity and no 3'-5' exonuclease activity. This chain is DNA polymerase I, thermostable (polA), found in Thermus caldophilus.